The chain runs to 834 residues: ATP-dependent 6-phosphofructokinase (834 aa).

Positions 1–426 are N-terminal catalytic PFK domain 1; it reads MTTTSKIIND…FYEIFIACSN (426 aa). Residues Gly62, 123-124, and 153-156 contribute to the ATP site; these read RS and GDGS. Asp154 contacts Mg(2+). Residues 199-201, Arg236, 243-245, Glu299, Arg326, and 332-335 contribute to the substrate site; these read SID, MGR, and HVQR. Asp201 acts as the Proton acceptor in catalysis. The interdomain linker stretch occupies residues 427 to 437; sequence LHRRKVESKGM. The tract at residues 438–834 is C-terminal regulatory PFK domain 2; the sequence is GVLILHSGGP…DPNVNPQFTL (397 aa). Beta-D-fructose 2,6-bisphosphate-binding positions include Arg507, 566-570, Arg603, 610-612, Glu666, Arg692, 698-701, and Arg764; these read TIANN, MGA, and HLQQ. A disordered region spans residues 799-834; the sequence is SNLSEQDRPIKKSDISSPTSYSQKTFDPNVNPQFTL. A compositionally biased stretch (basic and acidic residues) spans 803 to 812; it reads EQDRPIKKSD. Polar residues predominate over residues 813 to 834; that stretch reads ISSPTSYSQKTFDPNVNPQFTL.

Belongs to the phosphofructokinase type A (PFKA) family. ATP-dependent PFK group I subfamily. Eukaryotic two domain clade 'E' sub-subfamily. In terms of assembly, homotetramer. Requires Mg(2+) as cofactor. Post-translationally, the N-terminus is blocked.

The protein localises to the cytoplasm. The enzyme catalyses beta-D-fructose 6-phosphate + ATP = beta-D-fructose 1,6-bisphosphate + ADP + H(+). Its pathway is carbohydrate degradation; glycolysis; D-glyceraldehyde 3-phosphate and glycerone phosphate from D-glucose: step 3/4. Allosterically activated by ADP, AMP, or fructose 2,6-bisphosphate, and allosterically inhibited by ATP or citrate. Its function is as follows. Catalyzes the phosphorylation of D-fructose 6-phosphate to fructose 1,6-bisphosphate by ATP, the first committing step of glycolysis. The chain is ATP-dependent 6-phosphofructokinase (pfkA) from Dictyostelium discoideum (Social amoeba).